We begin with the raw amino-acid sequence, 369 residues long: Phospho-N-acetylmuramoyl-pentapeptide-transferase (369 aa).

10 helical membrane passes run 30 to 50 (LAIF…IRWM), 74 to 94 (GTPT…TLLW), 97 to 117 (LSNP…LLGF), 136 to 156 (IRLA…IVFA), 177 to 197 (YFVD…VGAA), 208 to 228 (GLAT…AYLV), 244 to 264 (GVGE…GFLW), 272 to 292 (IFMG…VAVA), 297 to 317 (IVLA…IIQV), and 346 to 366 (TVVI…LATL).

This sequence belongs to the glycosyltransferase 4 family. MraY subfamily. The cofactor is Mg(2+).

The protein localises to the cell inner membrane. The enzyme catalyses UDP-N-acetyl-alpha-D-muramoyl-L-alanyl-gamma-D-glutamyl-meso-2,6-diaminopimeloyl-D-alanyl-D-alanine + di-trans,octa-cis-undecaprenyl phosphate = di-trans,octa-cis-undecaprenyl diphospho-N-acetyl-alpha-D-muramoyl-L-alanyl-D-glutamyl-meso-2,6-diaminopimeloyl-D-alanyl-D-alanine + UMP. It participates in cell wall biogenesis; peptidoglycan biosynthesis. Its function is as follows. Catalyzes the initial step of the lipid cycle reactions in the biosynthesis of the cell wall peptidoglycan: transfers peptidoglycan precursor phospho-MurNAc-pentapeptide from UDP-MurNAc-pentapeptide onto the lipid carrier undecaprenyl phosphate, yielding undecaprenyl-pyrophosphoryl-MurNAc-pentapeptide, known as lipid I. This is Phospho-N-acetylmuramoyl-pentapeptide-transferase from Phenylobacterium zucineum (strain HLK1).